Consider the following 30-residue polypeptide: GIPCAESCVWIPCTVTALLGCSCSNKVCYN.

A cross-link (cyclopeptide (Gly-Asn)) is located at residues 1-30 (GIPCAESCVWIPCTVTALLGCSCSNKVCYN). Intrachain disulfides connect Cys-4/Cys-21, Cys-8/Cys-23, and Cys-13/Cys-28.

Post-translationally, this is a cyclic peptide. As to expression, expressed in roots.

Probably participates in a plant defense mechanism. The polypeptide is Root cyclotide 1 (Viola hederacea (Australian violet)).